The sequence spans 603 residues: Keratin, type II cuticular Hb4 (603 aa).

The segment at 1–173 (MSCRSYRVSS…PNAQRVKRDE (173 aa)) is head. The IF rod domain maps to 173 to 484 (EKEQIKTLNN…RLLEGEEIRI (312 aa)). Residues 174 to 208 (KEQIKTLNNKFASFIDKVRFLEQQNKLLETKWSFL) form a coil 1A region. The linker 1 stretch occupies residues 209 to 218 (QEQKCARSNL). A coil 1B region spans residues 219 to 319 (EPLFDNYITN…YHEEIEMLQS (101 aa)). Residues 320–336 (HISETSVIVKMDNSRDL) form a linker 12 region. The interval 337–480 (NLDGIIAEVK…VTYRRLLEGE (144 aa)) is coil 2. Residues 481 to 603 (EIRICEGVGP…STTTSRRTRY (123 aa)) form a tail region. Residues 579–603 (CSGGRGNRSSSVRFSSTTTSRRTRY) form a disordered region.

It belongs to the intermediate filament family. As to quaternary structure, heterotetramer of two type I and two type II keratins. As to expression, in skin, only expressed in the suprabasal cells of tail scale epidermis. Suprabasally expressed in stratified squamous epithelia and also in the posterior unit of the complex filiform papillae of tongue. Expressed in rare anatomical sites in which an orthokeratinized stratum corneum would be too soft and a hard keratinized structure would be too rigid to meet the functional requirement of the respective epithelia.

The polypeptide is Keratin, type II cuticular Hb4 (Krt84) (Mus musculus (Mouse)).